A 311-amino-acid polypeptide reads, in one-letter code: Sulfate adenylyltransferase subunit 2 (311 aa).

Belongs to the PAPS reductase family. CysD subfamily. Heterodimer composed of CysD, the smaller subunit, and CysN.

The catalysed reaction is sulfate + ATP + H(+) = adenosine 5'-phosphosulfate + diphosphate. Its pathway is sulfur metabolism; hydrogen sulfide biosynthesis; sulfite from sulfate: step 1/3. Functionally, with CysN forms the ATP sulfurylase (ATPS) that catalyzes the adenylation of sulfate producing adenosine 5'-phosphosulfate (APS) and diphosphate, the first enzymatic step in sulfur assimilation pathway. APS synthesis involves the formation of a high-energy phosphoric-sulfuric acid anhydride bond driven by GTP hydrolysis by CysN coupled to ATP hydrolysis by CysD. This is Sulfate adenylyltransferase subunit 2 from Methylobacterium sp. (strain 4-46).